We begin with the raw amino-acid sequence, 417 residues long: Serine hydroxymethyltransferase (417 aa).

Residues leucine 121 and 125–127 (GHL) contribute to the (6S)-5,6,7,8-tetrahydrofolate site. Lysine 229 is subject to N6-(pyridoxal phosphate)lysine. 355 to 357 (SPF) serves as a coordination point for (6S)-5,6,7,8-tetrahydrofolate.

Belongs to the SHMT family. In terms of assembly, homodimer. It depends on pyridoxal 5'-phosphate as a cofactor.

It is found in the cytoplasm. The enzyme catalyses (6R)-5,10-methylene-5,6,7,8-tetrahydrofolate + glycine + H2O = (6S)-5,6,7,8-tetrahydrofolate + L-serine. It functions in the pathway one-carbon metabolism; tetrahydrofolate interconversion. The protein operates within amino-acid biosynthesis; glycine biosynthesis; glycine from L-serine: step 1/1. In terms of biological role, catalyzes the reversible interconversion of serine and glycine with tetrahydrofolate (THF) serving as the one-carbon carrier. This reaction serves as the major source of one-carbon groups required for the biosynthesis of purines, thymidylate, methionine, and other important biomolecules. Also exhibits THF-independent aldolase activity toward beta-hydroxyamino acids, producing glycine and aldehydes, via a retro-aldol mechanism. The sequence is that of Serine hydroxymethyltransferase from Xylella fastidiosa (strain M12).